The sequence spans 212 residues: Transcriptional regulator GfcR (212 aa).

Residues 38 to 60 (LVERSGTGTEPDTSDDGGPHDIH) form a disordered region.

The protein belongs to the purine/pyrimidine phosphoribosyltransferase family. GfcR subfamily.

DNA-binding transcriptional regulator that functions as a regulator of central sugar catabolic pathways. This is Transcriptional regulator GfcR from Haloarcula marismortui (strain ATCC 43049 / DSM 3752 / JCM 8966 / VKM B-1809) (Halobacterium marismortui).